A 494-amino-acid chain; its full sequence is Alpha-amylase-related protein (494 aa).

The first 20 residues, 1–20 (MIKFALALTLCLAGASLSLA), serve as a signal peptide directing secretion. Gln-21 bears the Pyrrolidone carboxylic acid mark. A disulfide bridge links Cys-48 with Cys-104. 3 residues coordinate Ca(2+): Asn-118, Gln-169, and Asp-178. Cys-157 and Cys-171 are oxidised to a cystine. Arg-206 contributes to the chloride binding site. The active-site Nucleophile is the Asp-208. His-212 serves as a coordination point for Ca(2+). Glu-245 functions as the Proton donor in the catalytic mechanism. Residues Asn-308 and Arg-343 each contribute to the chloride site. Intrachain disulfides connect Cys-376/Cys-382, Cys-418/Cys-441, and Cys-448/Cys-460.

It belongs to the glycosyl hydrolase 13 family. Monomer. The cofactor is Ca(2+). Requires chloride as cofactor.

The protein resides in the secreted. It catalyses the reaction Endohydrolysis of (1-&gt;4)-alpha-D-glucosidic linkages in polysaccharides containing three or more (1-&gt;4)-alpha-linked D-glucose units.. The sequence is that of Alpha-amylase-related protein (Amyrel) from Drosophila bocqueti (Fruit fly).